Consider the following 310-residue polypeptide: Glutaminase 1 (310 aa).

7 residues coordinate substrate: Ser66, Asn117, Glu161, Asn168, Tyr192, Tyr244, and Val262. Residue Lys294 is modified to N6-acetyllysine.

It belongs to the glutaminase family. Homotetramer.

The catalysed reaction is L-glutamine + H2O = L-glutamate + NH4(+). This is Glutaminase 1 from Shigella flexneri.